A 254-amino-acid polypeptide reads, in one-letter code: Probable triosephosphate isomerase 2 (254 aa).

Position 9–11 (9–11 (NMK)) interacts with substrate. H96 acts as the Electrophile in catalysis. E168 (proton acceptor) is an active-site residue. Positions 174 and 212 each coordinate substrate.

It belongs to the triosephosphate isomerase family. In terms of assembly, homodimer.

Its subcellular location is the cytoplasm. It catalyses the reaction D-glyceraldehyde 3-phosphate = dihydroxyacetone phosphate. It functions in the pathway carbohydrate biosynthesis; gluconeogenesis. The protein operates within carbohydrate degradation; glycolysis; D-glyceraldehyde 3-phosphate from glycerone phosphate: step 1/1. In terms of biological role, involved in the gluconeogenesis. Catalyzes stereospecifically the conversion of dihydroxyacetone phosphate (DHAP) to D-glyceraldehyde-3-phosphate (G3P). This chain is Probable triosephosphate isomerase 2, found in Listeria monocytogenes serovar 1/2a (strain ATCC BAA-679 / EGD-e).